The primary structure comprises 338 residues: Malate dehydrogenase, mitochondrial (338 aa).

The transit peptide at 1-24 (MLSALARPAGAALRRSFSTSXQNN) directs the protein to the mitochondrion. Residues 31 to 37 (GASGGIG) and Asp-57 each bind NAD(+). Ser-33 carries an O-linked (GlcNAc) serine glycan. 2 positions are modified to N6-acetyllysine; alternate: Lys-78 and Lys-91. An N6-succinyllysine; alternate mark is found at Lys-78 and Lys-91. Arg-104 and Arg-110 together coordinate substrate. Residues Asn-117 and 140 to 142 (ISN) each bind NAD(+). Residue Asn-142 coordinates substrate. N6-acetyllysine is present on Lys-165. Residue Arg-176 coordinates substrate. Lys-185 is subject to N6-acetyllysine; alternate. At Lys-185 the chain carries N6-succinyllysine; alternate. His-200 functions as the Proton acceptor in the catalytic mechanism. At Lys-203 the chain carries N6-succinyllysine. N6-acetyllysine; alternate occurs at positions 215 and 239. Residues Lys-215 and Lys-239 each carry the N6-succinyllysine; alternate modification. Lys-239 carries the post-translational modification N6-malonyllysine; alternate. A Phosphoserine modification is found at Ser-246. Met-251 is an NAD(+) binding site. Residue Lys-269 is modified to N6-succinyllysine. Lys-296, Lys-301, Lys-307, Lys-314, and Lys-324 each carry N6-acetyllysine; alternate. N6-succinyllysine; alternate is present on residues Lys-296, Lys-301, Lys-307, Lys-314, and Lys-324. Lys-307 bears the N6-malonyllysine; alternate mark. Ser-326 carries the phosphoserine modification. N6-acetyllysine; alternate occurs at positions 328, 329, and 335. Lys-328 carries the N6-succinyllysine; alternate modification. Lys-329 is modified (N6-malonyllysine; alternate). Lys-335 carries the post-translational modification N6-succinyllysine; alternate.

The protein belongs to the LDH/MDH superfamily. MDH type 1 family. As to quaternary structure, homodimer. Post-translationally, acetylation is enhanced after treatment either with trichostin A (TCA) or with nicotinamide (NAM) with the appearance of tri- and tetraacetylations. Glucose also increases acetylation.

It is found in the mitochondrion matrix. The catalysed reaction is (S)-malate + NAD(+) = oxaloacetate + NADH + H(+). Enzyme activity is enhanced by acetylation. In Sus scrofa (Pig), this protein is Malate dehydrogenase, mitochondrial (MDH2).